We begin with the raw amino-acid sequence, 83 residues long: uncharacterized protein (83 aa).

The chain crosses the membrane as a helical span at residues 24-44; sequence AMTLLIITNTLLIILSYSVLL.

The protein localises to the host membrane. This is an uncharacterized protein from Acidianus sp. F28 (AFV-2).